Here is an 870-residue protein sequence, read N- to C-terminus: Protein csx2 (870 aa).

Positions 212 to 251 (TSPEISDAPPLSGNVDPLPINSPPLTNPVARDIDQTEPED) are disordered. Residues 510–614 (TSAKQGLLLA…WIEAIQYSIS (105 aa)) enclose the PH domain. Phosphoserine is present on residues S625, S653, and S655. The interval 647–672 (RVASVTSPSRHNSDSKEKKQTKSPSL) is disordered. The segment covering 657–666 (HNSDSKEKKQ) has biased composition (basic and acidic residues). An Arf-GAP domain is found at 670–791 (PSLVKTLKEM…RFIKSSFSHD (122 aa)). The C4-type zinc finger occupies 686–710 (CADCNTTARVEWCAINFPVVLCIDC).

The sequence is that of Protein csx2 (csx2) from Schizosaccharomyces pombe (strain 972 / ATCC 24843) (Fission yeast).